We begin with the raw amino-acid sequence, 795 residues long: Delta-1-pyrroline-5-carboxylate synthase (795 aa).

Residues 1 to 361 (MLSQVYRCGF…FFSEVKPAGP (361 aa)) are glutamate 5-kinase. Residues S117, D223, and N246 each coordinate substrate. Residues 266–267 (SD) and 305–311 (MGGMEAK) contribute to the ATP site. 3 positions are modified to N6-succinyllysine: K311, K347, and K550. The segment at 362–795 (TVEQQGEMAR…NLPIPQRNTN (434 aa)) is gamma-glutamyl phosphate reductase.

In the N-terminal section; belongs to the glutamate 5-kinase family. It in the C-terminal section; belongs to the gamma-glutamyl phosphate reductase family. As to quaternary structure, can form homodimers/multimers.

It is found in the mitochondrion. The protein resides in the mitochondrion matrix. The enzyme catalyses L-glutamate + ATP = L-glutamyl 5-phosphate + ADP. The catalysed reaction is L-glutamate 5-semialdehyde + phosphate + NADP(+) = L-glutamyl 5-phosphate + NADPH + H(+). The protein operates within amino-acid biosynthesis; L-proline biosynthesis; L-glutamate 5-semialdehyde from L-glutamate: step 1/2. It functions in the pathway amino-acid biosynthesis; L-proline biosynthesis; L-glutamate 5-semialdehyde from L-glutamate: step 2/2. Isoform Short: Inhibited by L-ornithine with a Ki of approximately 0.25 mm. Isoform Long: Insensitive to ornithine inhibition. This is due to the two amino acid insert which abolishes feedback inhibition of P5CS activity by L-ornithine. Bifunctional enzyme that converts glutamate to glutamate 5-semialdehyde, an intermediate in the biosynthesis of proline, ornithine and arginine. The sequence is that of Delta-1-pyrroline-5-carboxylate synthase (ALDH18A1) from Homo sapiens (Human).